The primary structure comprises 181 residues: Adenine phosphoribosyltransferase (181 aa).

The protein belongs to the purine/pyrimidine phosphoribosyltransferase family. Homodimer.

It is found in the cytoplasm. It carries out the reaction AMP + diphosphate = 5-phospho-alpha-D-ribose 1-diphosphate + adenine. The protein operates within purine metabolism; AMP biosynthesis via salvage pathway; AMP from adenine: step 1/1. Its function is as follows. Catalyzes a salvage reaction resulting in the formation of AMP, that is energically less costly than de novo synthesis. This chain is Adenine phosphoribosyltransferase, found in Chromohalobacter salexigens (strain ATCC BAA-138 / DSM 3043 / CIP 106854 / NCIMB 13768 / 1H11).